We begin with the raw amino-acid sequence, 331 residues long: Biotin synthase (331 aa).

In terms of domain architecture, Radical SAM core spans 52–277 (PDVEVEGIIS…RTMLRFAGGR (226 aa)). [4Fe-4S] cluster is bound by residues C67, C71, and C74. C110, C143, C202, and R272 together coordinate [2Fe-2S] cluster.

The protein belongs to the radical SAM superfamily. Biotin synthase family. Homodimer. [4Fe-4S] cluster is required as a cofactor. [2Fe-2S] cluster serves as cofactor.

The enzyme catalyses (4R,5S)-dethiobiotin + (sulfur carrier)-SH + 2 reduced [2Fe-2S]-[ferredoxin] + 2 S-adenosyl-L-methionine = (sulfur carrier)-H + biotin + 2 5'-deoxyadenosine + 2 L-methionine + 2 oxidized [2Fe-2S]-[ferredoxin]. Its pathway is cofactor biosynthesis; biotin biosynthesis; biotin from 7,8-diaminononanoate: step 2/2. Functionally, catalyzes the conversion of dethiobiotin (DTB) to biotin by the insertion of a sulfur atom into dethiobiotin via a radical-based mechanism. This Mycobacterium sp. (strain JLS) protein is Biotin synthase.